The chain runs to 181 residues: uncharacterized protein (181 aa).

2 consecutive transmembrane segments (helical) span residues 24–46 and 55–77; these read IAAV…LLNV and GIVA…YILL.

The protein localises to the cell membrane. This is an uncharacterized protein from Archaeoglobus fulgidus (strain ATCC 49558 / DSM 4304 / JCM 9628 / NBRC 100126 / VC-16).